We begin with the raw amino-acid sequence, 443 residues long: Glucose-6-phosphate isomerase (443 aa).

The Proton donor role is filled by Glu285. Residues His306 and Lys420 contribute to the active site.

This sequence belongs to the GPI family.

Its subcellular location is the cytoplasm. The enzyme catalyses alpha-D-glucose 6-phosphate = beta-D-fructose 6-phosphate. The protein operates within carbohydrate biosynthesis; gluconeogenesis. It functions in the pathway carbohydrate degradation; glycolysis; D-glyceraldehyde 3-phosphate and glycerone phosphate from D-glucose: step 2/4. In terms of biological role, catalyzes the reversible isomerization of glucose-6-phosphate to fructose-6-phosphate. The polypeptide is Glucose-6-phosphate isomerase (Staphylococcus aureus (strain NCTC 8325 / PS 47)).